Reading from the N-terminus, the 298-residue chain is Inosose dehydratase (298 aa).

Belongs to the IolE/MocC family. Glutathione is required as a cofactor. Co(2+) serves as cofactor. Requires Mn(2+) as cofactor.

It catalyses the reaction scyllo-inosose = 3D-3,5/4-trihydroxycyclohexane-1,2-dione + H2O. Catalyzes the dehydration of inosose (2-keto-myo-inositol, 2KMI or 2,4,6/3,5-pentahydroxycyclohexanone) to 3D-(3,5/4)-trihydroxycyclohexane-1,2-dione (D-2,3-diketo-4-deoxy-epi-inositol). In Yersinia enterocolitica serotype O:8 / biotype 1B (strain NCTC 13174 / 8081), this protein is Inosose dehydratase.